The chain runs to 434 residues: Histidinol dehydrogenase (434 aa).

Zn(2+) is bound by residues Glu-260 and His-263. Catalysis depends on proton acceptor residues Glu-330 and His-331. His-423 serves as a coordination point for Zn(2+).

The protein belongs to the histidinol dehydrogenase family. Requires Zn(2+) as cofactor.

The enzyme catalyses L-histidinol + 2 NAD(+) + H2O = L-histidine + 2 NADH + 3 H(+). It participates in amino-acid biosynthesis; L-histidine biosynthesis; L-histidine from 5-phospho-alpha-D-ribose 1-diphosphate: step 9/9. In terms of biological role, catalyzes the sequential NAD-dependent oxidations of L-histidinol to L-histidinaldehyde and then to L-histidine. The chain is Histidinol dehydrogenase (hisD) from Synechocystis sp. (strain ATCC 27184 / PCC 6803 / Kazusa).